The sequence spans 228 residues: 2,3-bisphosphoglycerate-dependent phosphoglycerate mutase (228 aa).

Substrate-binding positions include 8–15 (RHGQSEWN), 21–22 (TG), Arg-60, 87–90 (ERHY), Lys-98, 114–115 (RR), and 183–184 (GN). The active-site Tele-phosphohistidine intermediate is the His-9. Glu-87 acts as the Proton donor/acceptor in catalysis.

This sequence belongs to the phosphoglycerate mutase family. BPG-dependent PGAM subfamily.

The catalysed reaction is (2R)-2-phosphoglycerate = (2R)-3-phosphoglycerate. It participates in carbohydrate degradation; glycolysis; pyruvate from D-glyceraldehyde 3-phosphate: step 3/5. Catalyzes the interconversion of 2-phosphoglycerate and 3-phosphoglycerate. In Staphylococcus epidermidis (strain ATCC 35984 / DSM 28319 / BCRC 17069 / CCUG 31568 / BM 3577 / RP62A), this protein is 2,3-bisphosphoglycerate-dependent phosphoglycerate mutase.